An 89-amino-acid polypeptide reads, in one-letter code: Small ribosomal subunit protein uS15 (89 aa).

The segment at 1 to 24 (MSLNAEQKSEIVEQFRRSPSDTGS) is disordered. Positions 7 to 19 (QKSEIVEQFRRSP) are enriched in basic and acidic residues.

The protein belongs to the universal ribosomal protein uS15 family. In terms of assembly, part of the 30S ribosomal subunit. Forms a bridge to the 50S subunit in the 70S ribosome, contacting the 23S rRNA.

Its function is as follows. One of the primary rRNA binding proteins, it binds directly to 16S rRNA where it helps nucleate assembly of the platform of the 30S subunit by binding and bridging several RNA helices of the 16S rRNA. In terms of biological role, forms an intersubunit bridge (bridge B4) with the 23S rRNA of the 50S subunit in the ribosome. This chain is Small ribosomal subunit protein uS15, found in Halorhodospira halophila (strain DSM 244 / SL1) (Ectothiorhodospira halophila (strain DSM 244 / SL1)).